Reading from the N-terminus, the 905-residue chain is Protein translocase subunit SecA (905 aa).

Residues glutamine 87, 105–109, and aspartate 512 each bind ATP; that span reads GEGKT. Residues 840 to 905 are disordered; sequence AQRQQEAMAQ…HCHGSKARYA (66 aa). Positions 843–852 are enriched in low complexity; that stretch reads QQEAMAQAES. Over residues 853–862 the composition is skewed to basic and acidic residues; that stretch reads ENYRTADHQA. Over residues 863-874 the composition is skewed to polar residues; the sequence is EAQQSESLTEEQ. Cysteine 886, cysteine 888, cysteine 897, and histidine 898 together coordinate Zn(2+). Residues 892–905 are compositionally biased toward basic residues; sequence KKYKHCHGSKARYA.

It belongs to the SecA family. In terms of assembly, monomer and homodimer. Part of the essential Sec protein translocation apparatus which comprises SecA, SecYEG and auxiliary proteins SecDF-YajC and YidC. Requires Zn(2+) as cofactor.

The protein localises to the cell inner membrane. It is found in the cytoplasm. It catalyses the reaction ATP + H2O + cellular proteinSide 1 = ADP + phosphate + cellular proteinSide 2.. In terms of biological role, part of the Sec protein translocase complex. Interacts with the SecYEG preprotein conducting channel. Has a central role in coupling the hydrolysis of ATP to the transfer of proteins into and across the cell membrane, serving both as a receptor for the preprotein-SecB complex and as an ATP-driven molecular motor driving the stepwise translocation of polypeptide chains across the membrane. The polypeptide is Protein translocase subunit SecA (Actinobacillus pleuropneumoniae serotype 3 (strain JL03)).